A 316-amino-acid polypeptide reads, in one-letter code: Ribosomal RNA small subunit methyltransferase H (316 aa).

S-adenosyl-L-methionine-binding positions include 35–37 (AGH), D55, F84, D105, and Q112.

Belongs to the methyltransferase superfamily. RsmH family.

It localises to the cytoplasm. It catalyses the reaction cytidine(1402) in 16S rRNA + S-adenosyl-L-methionine = N(4)-methylcytidine(1402) in 16S rRNA + S-adenosyl-L-homocysteine + H(+). Functionally, specifically methylates the N4 position of cytidine in position 1402 (C1402) of 16S rRNA. This is Ribosomal RNA small subunit methyltransferase H from Streptococcus pneumoniae (strain 70585).